Reading from the N-terminus, the 218-residue chain is Small ribosomal subunit protein uS3c (218 aa).

One can recognise a KH type-2 domain in the interval 43–118; sequence IKNYVQKNPR…RLNIAIARIS (76 aa).

The protein belongs to the universal ribosomal protein uS3 family. As to quaternary structure, part of the 30S ribosomal subunit.

It is found in the plastid. Its subcellular location is the chloroplast. The chain is Small ribosomal subunit protein uS3c (rps3) from Acorus calamus (Sweet flag).